A 62-amino-acid chain; its full sequence is Small ribosomal subunit protein eS27 (62 aa).

Residues cysteine 17, cysteine 20, cysteine 36, and cysteine 39 each coordinate Zn(2+). A C4-type zinc finger spans residues 17-39 (CPDCENEQIIFEKASTVVDCVVC).

The protein belongs to the eukaryotic ribosomal protein eS27 family. In terms of assembly, part of the 30S ribosomal subunit. Requires Zn(2+) as cofactor.

In Methanosphaerula palustris (strain ATCC BAA-1556 / DSM 19958 / E1-9c), this protein is Small ribosomal subunit protein eS27.